Consider the following 92-residue polypeptide: MATEQTILVGKKPATNYVIATVMAFNAGVKRVVLKARGAAISKAVSTAVMVRDRFLPGKVQIKDIKVLSDKVQGQGGRERTVAAVEIVLEMA.

The residue at position 11 (Lys-11) is an N6-acetyllysine.

This sequence belongs to the histone-like Alba family. Acetylated. Acetylation at Lys-11 decreases DNA-binding affinity.

It is found in the cytoplasm. Its subcellular location is the chromosome. Functionally, binds double-stranded DNA tightly but without sequence specificity. Involved in DNA compaction. The protein is DNA/RNA-binding protein Alba of Pyrobaculum neutrophilum (strain DSM 2338 / JCM 9278 / NBRC 100436 / V24Sta) (Thermoproteus neutrophilus).